A 163-amino-acid polypeptide reads, in one-letter code: UPF0763 protein CJJ81176_1011 (163 aa).

It belongs to the UPF0763 family.

The polypeptide is UPF0763 protein CJJ81176_1011 (Campylobacter jejuni subsp. jejuni serotype O:23/36 (strain 81-176)).